Reading from the N-terminus, the 444-residue chain is Acyl-CoA 6-desaturase (444 aa).

Positions 1–21 are disordered; that stretch reads MGKGGNQGEGSTERQAPMPTF. Residues 1–130 lie on the Cytoplasmic side of the membrane; that stretch reads MGKGGNQGEG…EDMNLFKTNH (130 aa). The region spanning 18–95 is the Cytochrome b5 heme-binding domain; that stretch reads MPTFRWEEIQ…LKPLLIGELA (78 aa). Residues 131-151 form a helical membrane-spanning segment; sequence LFFFLLLSHIIVMESLAWFIL. Residue S152 is a topological domain, lumenal. Residues 153-173 traverse the membrane as a helical segment; that stretch reads YFGTGWIPTLVTAFVLATSQA. Residues 174 to 264 lie on the Cytoplasmic side of the membrane; the sequence is QAGWLQHDYG…KYLPYNHQHE (91 aa). The short motif at 180 to 184 is the Histidine box-1 element; that stretch reads HDYGH. Residues 217 to 221 carry the Histidine box-2 motif; the sequence is HFQHH. A helical transmembrane segment spans residues 265-285; it reads YFFLIGPPLLIPMYFQYQIIM. Residues 286 to 305 are Lumenal-facing; it reads TMISRRDWVDLAWAISYYMR. A helical transmembrane segment spans residues 306–326; sequence FFYTYIPFYGILGALVFLNFI. The Cytoplasmic portion of the chain corresponds to 327–444; it reads RFLESHWFVW…ELWLDAYLHK (118 aa). Positions 382–386 match the Histidine box-3 motif; that stretch reads QIEHH.

It belongs to the fatty acid desaturase type 1 family. As to expression, highly expressed in the adrenal gland, liver, brain, and testis, tissues where lipogenesis and steroidogenesis are active. Also detected in lung, heart, and skeletal muscle.

It is found in the endoplasmic reticulum membrane. The catalysed reaction is (9Z,12Z)-octadecadienoyl-CoA + 2 Fe(II)-[cytochrome b5] + O2 + 2 H(+) = (6Z,9Z,12Z)-octadecatrienoyl-CoA + 2 Fe(III)-[cytochrome b5] + 2 H2O. The enzyme catalyses (9Z,12Z,15Z)-octadecatrienoyl-CoA + 2 Fe(II)-[cytochrome b5] + O2 + 2 H(+) = (6Z,9Z,12Z,15Z)-octadecatetraenoyl-CoA + 2 Fe(III)-[cytochrome b5] + 2 H2O. It carries out the reaction (9Z,12Z,15Z,18Z,21Z)-tetracosapentaenoyl-CoA + 2 Fe(II)-[cytochrome b5] + O2 + 2 H(+) = (6Z,9Z,12Z,15Z,18Z,21Z)-tetracosahexaenoyl-CoA + 2 Fe(III)-[cytochrome b5] + 2 H2O. It catalyses the reaction (11E)-octadecenoyl-CoA + 2 Fe(II)-[cytochrome b5] + O2 + 2 H(+) = (6Z,11E)-octadecadienoyl-CoA + 2 Fe(III)-[cytochrome b5] + 2 H2O. The catalysed reaction is (11Z,14Z)-eicosadienoyl-CoA + 2 Fe(II)-[cytochrome b5] + O2 + 2 H(+) = (8Z,11Z,14Z)-eicosatrienoyl-CoA + 2 Fe(III)-[cytochrome b5] + 2 H2O. The enzyme catalyses (11Z,14Z,17Z)-eicosatrienoyl-CoA + 2 Fe(II)-[cytochrome b5] + O2 + 2 H(+) = (8Z,11Z,14Z,17Z)-eicosatetraenoyl-CoA + 2 Fe(III)-[cytochrome b5] + 2 H2O. The protein operates within lipid metabolism; polyunsaturated fatty acid biosynthesis. Involved in the biosynthesis of highly unsaturated fatty acids (HUFA) from the essential polyunsaturated fatty acids (PUFA) linoleic acid (LA) (18:2n-6) and alpha-linolenic acid (ALA) (18:3n-3) precursors, acting as a fatty acyl-coenzyme A (CoA) desaturase that introduces a cis double bond at carbon 6 of the fatty acyl chain. Catalyzes the first and rate limiting step in this pathway which is the desaturation of LA (18:2n-6) and ALA (18:3n-3) into gamma-linoleate (GLA) (18:3n-6) and stearidonate (18:4n-3), respectively. Subsequently, in the biosynthetic pathway of HUFA n-3 series, it desaturates tetracosapentaenoate (24:5n-3) to tetracosahexaenoate (24:6n-3), which is then converted to docosahexaenoate (DHA)(22:6n-3), an important lipid for nervous system function. It can also desaturate (11E)-octadecenoate (trans-vaccenoate) at carbon 6 generating (6Z,11E)-octadecadienoate. In addition to Delta-6 activity, this enzyme exhibits Delta-8 activity with slight biases toward n-3 fatty acyl-CoA substrates. The chain is Acyl-CoA 6-desaturase from Mus musculus (Mouse).